A 302-amino-acid chain; its full sequence is Pyridoxal 5'-phosphate synthase subunit PdxS (302 aa).

Residue Asp32 participates in D-ribose 5-phosphate binding. Lys89 functions as the Schiff-base intermediate with D-ribose 5-phosphate in the catalytic mechanism. Gly161 is a binding site for D-ribose 5-phosphate. A D-glyceraldehyde 3-phosphate-binding site is contributed by Arg173. Residues Gly222 and 243 to 244 (GS) each bind D-ribose 5-phosphate. The disordered stretch occupies residues 275–302 (IAKNPGKGMKGQANADLDEEEQLQGRGV).

This sequence belongs to the PdxS/SNZ family. In terms of assembly, in the presence of PdxT, forms a dodecamer of heterodimers.

It carries out the reaction aldehydo-D-ribose 5-phosphate + D-glyceraldehyde 3-phosphate + L-glutamine = pyridoxal 5'-phosphate + L-glutamate + phosphate + 3 H2O + H(+). The protein operates within cofactor biosynthesis; pyridoxal 5'-phosphate biosynthesis. Functionally, catalyzes the formation of pyridoxal 5'-phosphate from ribose 5-phosphate (RBP), glyceraldehyde 3-phosphate (G3P) and ammonia. The ammonia is provided by the PdxT subunit. Can also use ribulose 5-phosphate and dihydroxyacetone phosphate as substrates, resulting from enzyme-catalyzed isomerization of RBP and G3P, respectively. In Haloarcula marismortui (strain ATCC 43049 / DSM 3752 / JCM 8966 / VKM B-1809) (Halobacterium marismortui), this protein is Pyridoxal 5'-phosphate synthase subunit PdxS.